A 394-amino-acid chain; its full sequence is Xylose isomerase (394 aa).

Catalysis depends on residues histidine 54 and aspartate 57. 7 residues coordinate Mg(2+): glutamate 181, glutamate 217, histidine 220, aspartate 245, aspartate 255, aspartate 257, and aspartate 292.

This sequence belongs to the xylose isomerase family. In terms of assembly, homotetramer. Requires Mg(2+) as cofactor.

The protein localises to the cytoplasm. It carries out the reaction alpha-D-xylose = alpha-D-xylulofuranose. In Actinoplanes sp. (strain ATCC 31351 / 3876) (Ampullariella sp.), this protein is Xylose isomerase (xylA).